A 303-amino-acid chain; its full sequence is Small ribosomal subunit protein bS1m (303 aa).

Ser-2 bears the N-acetylserine mark. The N-terminal 12 residues, 2–13 (SFAQILRGSRAM), are a transit peptide targeting the mitochondrion; not cleaved.

Belongs to the bacterial ribosomal protein bS1 family. Component of the mitochondrial small ribosomal subunit (mt-SSU). Mature yeast 74S mitochondrial ribosomes consist of a small (37S) and a large (54S) subunit. The 37S small subunit contains a 15S ribosomal RNA (15S mt-rRNA) and at least 32 different proteins. The 54S large subunit contains a 21S rRNA (21S mt-rRNA) and at least 45 different proteins. This subunit is mutually exclusive with mug178/small ribosomal subunit protein L51-b.

The protein resides in the mitochondrion. Functionally, component of the mitochondrial ribosome (mitoribosome), a dedicated translation machinery responsible for the synthesis of mitochondrial genome-encoded proteins, including at least some of the essential transmembrane subunits of the mitochondrial respiratory chain. The mitoribosomes are attached to the mitochondrial inner membrane and translation products are cotranslationally integrated into the membrane. bS1m functionally interacts with the 5'-UTR of mitochondrial mRNAs. Plays an essential role in mitochondrial translation. The chain is Small ribosomal subunit protein bS1m (mrp51) from Schizosaccharomyces pombe (strain 972 / ATCC 24843) (Fission yeast).